A 777-amino-acid polypeptide reads, in one-letter code: Biotin sulfoxide reductase (777 aa).

Ser-148 serves as a coordination point for Mo-bis(molybdopterin guanine dinucleotide).

This sequence belongs to the prokaryotic molybdopterin-containing oxidoreductase family. Mo-bis(molybdopterin guanine dinucleotide) serves as cofactor.

It catalyses the reaction [thioredoxin]-disulfide + L-methionine + H2O = L-methionine (S)-S-oxide + [thioredoxin]-dithiol. Its function is as follows. This enzyme may serve as a scavenger, allowing the cell to utilize biotin sulfoxide as a biotin source. It reduces a spontaneous oxidation product of biotin, D-biotin D-sulfoxide (BSO or BDS), back to biotin. Also exhibits methionine-(S)-sulfoxide (Met-S-SO) reductase activity, acting specifically on the (S) enantiomer in the free, but not the protein-bound form. It thus plays a role in assimilation of oxidized methionines. This is Biotin sulfoxide reductase (bisC) from Escherichia coli (strain K12).